The chain runs to 417 residues: Serine hydroxymethyltransferase (417 aa).

Residues leucine 121 and 125–127 (GHL) contribute to the (6S)-5,6,7,8-tetrahydrofolate site. N6-(pyridoxal phosphate)lysine is present on lysine 229. Position 355 to 357 (355 to 357 (SPF)) interacts with (6S)-5,6,7,8-tetrahydrofolate.

This sequence belongs to the SHMT family. In terms of assembly, homodimer. Pyridoxal 5'-phosphate serves as cofactor.

Its subcellular location is the cytoplasm. The catalysed reaction is (6R)-5,10-methylene-5,6,7,8-tetrahydrofolate + glycine + H2O = (6S)-5,6,7,8-tetrahydrofolate + L-serine. It functions in the pathway one-carbon metabolism; tetrahydrofolate interconversion. Its pathway is amino-acid biosynthesis; glycine biosynthesis; glycine from L-serine: step 1/1. In terms of biological role, catalyzes the reversible interconversion of serine and glycine with tetrahydrofolate (THF) serving as the one-carbon carrier. This reaction serves as the major source of one-carbon groups required for the biosynthesis of purines, thymidylate, methionine, and other important biomolecules. Also exhibits THF-independent aldolase activity toward beta-hydroxyamino acids, producing glycine and aldehydes, via a retro-aldol mechanism. This is Serine hydroxymethyltransferase from Xylella fastidiosa (strain 9a5c).